Reading from the N-terminus, the 830-residue chain is Leucine--tRNA ligase (830 aa).

The short motif at 34–44 is the 'HIGH' region element; that stretch reads PYPSGNIHMGH. Positions 592–596 match the 'KMSKS' region motif; that stretch reads KMSKS. Residue Lys-595 coordinates ATP.

This sequence belongs to the class-I aminoacyl-tRNA synthetase family.

It localises to the cytoplasm. It carries out the reaction tRNA(Leu) + L-leucine + ATP = L-leucyl-tRNA(Leu) + AMP + diphosphate. The chain is Leucine--tRNA ligase from Ehrlichia ruminantium (strain Gardel).